Reading from the N-terminus, the 498-residue chain is Aspartyl aminopeptidase (498 aa).

Position 91 (His-91) interacts with Zn(2+). His-166 contributes to the substrate binding site. Residue Asp-274 coordinates Zn(2+). Residue Glu-311 coordinates substrate. Zn(2+)-binding residues include Glu-312 and Asp-363. Substrate contacts are provided by Asp-363, His-366, Lys-391, and Tyr-398. His-463 is a Zn(2+) binding site.

The protein belongs to the peptidase M18 family. Tetrahedron-shaped homododecamer built from six homodimers. Zn(2+) is required as a cofactor. The N-terminus is blocked.

It carries out the reaction Release of an N-terminal aspartate or glutamate from a peptide, with a preference for aspartate.. Inhibited by zinc. Stimulated by calcium and bacitracin. In Aspergillus oryzae (strain ATCC 42149 / RIB 40) (Yellow koji mold), this protein is Aspartyl aminopeptidase (dapA).